Reading from the N-terminus, the 479-residue chain is Glycogen synthase (479 aa).

An ADP-alpha-D-glucose-binding site is contributed by Lys15.

The protein belongs to the glycosyltransferase 1 family. Bacterial/plant glycogen synthase subfamily.

The enzyme catalyses [(1-&gt;4)-alpha-D-glucosyl](n) + ADP-alpha-D-glucose = [(1-&gt;4)-alpha-D-glucosyl](n+1) + ADP + H(+). Its pathway is glycan biosynthesis; glycogen biosynthesis. Its function is as follows. Synthesizes alpha-1,4-glucan chains using ADP-glucose. In Acidiphilium cryptum (strain JF-5), this protein is Glycogen synthase.